The sequence spans 384 residues: UDP-4-amino-4-deoxy-L-arabinose--oxoglutarate aminotransferase (384 aa).

Lys-182 bears the N6-(pyridoxal phosphate)lysine mark.

It belongs to the DegT/DnrJ/EryC1 family. ArnB subfamily. As to quaternary structure, homodimer. Pyridoxal 5'-phosphate serves as cofactor.

It carries out the reaction UDP-4-amino-4-deoxy-beta-L-arabinose + 2-oxoglutarate = UDP-beta-L-threo-pentopyranos-4-ulose + L-glutamate. The protein operates within nucleotide-sugar biosynthesis; UDP-4-deoxy-4-formamido-beta-L-arabinose biosynthesis; UDP-4-deoxy-4-formamido-beta-L-arabinose from UDP-alpha-D-glucuronate: step 2/3. Its pathway is bacterial outer membrane biogenesis; lipopolysaccharide biosynthesis. Catalyzes the conversion of UDP-4-keto-arabinose (UDP-Ara4O) to UDP-4-amino-4-deoxy-L-arabinose (UDP-L-Ara4N). The modified arabinose is attached to lipid A and is required for resistance to polymyxin and cationic antimicrobial peptides. The sequence is that of UDP-4-amino-4-deoxy-L-arabinose--oxoglutarate aminotransferase from Yersinia pseudotuberculosis serotype O:1b (strain IP 31758).